Consider the following 237-residue polypeptide: MTPQDFYRTLEEDGFSLSSKQKEQFDTYFKLLVEWNTKINLTAITEENEVYLKHFYDSIAPILQGFLANEPIKLLDIGAGAGFPSLPMKILFPNLEVTIIDSLNKRISFLTLLAQELGLENVHFFHGRAEDFGQDKAFRGQFDVVTARAVARMQVLSELTIPFLKIRGKLIALKAQAADQELEEAKNALCLLFGKVIKNHSYQLPNGDSRFITIVEKKKETPNKYPRKAGLPNKKPL.

S-adenosyl-L-methionine-binding positions include glycine 78, phenylalanine 83, 129–130 (AE), and arginine 148.

This sequence belongs to the methyltransferase superfamily. RNA methyltransferase RsmG family.

The protein localises to the cytoplasm. Its function is as follows. Specifically methylates the N7 position of a guanine in 16S rRNA. In Streptococcus pyogenes serotype M18 (strain MGAS8232), this protein is Ribosomal RNA small subunit methyltransferase G.